A 349-amino-acid polypeptide reads, in one-letter code: tRNA pseudouridine synthase D (349 aa).

Phe26 contacts substrate. Asp79 acts as the Nucleophile in catalysis. Asn128 is a substrate binding site. One can recognise a TRUD domain in the interval 154-302; it reads GVPNYFGSQR…VEGARRAILL (149 aa). Residue Phe328 participates in substrate binding.

It belongs to the pseudouridine synthase TruD family.

The catalysed reaction is uridine(13) in tRNA = pseudouridine(13) in tRNA. In terms of biological role, responsible for synthesis of pseudouridine from uracil-13 in transfer RNAs. The chain is tRNA pseudouridine synthase D from Yersinia enterocolitica serotype O:8 / biotype 1B (strain NCTC 13174 / 8081).